Reading from the N-terminus, the 462-residue chain is Cytochrome P450 20A1 (462 aa).

Residues 4-24 (FAIFAVTFLLALVGAVLYLYP) form a helical membrane-spanning segment. Cysteine 409 contacts heme.

This sequence belongs to the cytochrome P450 family. Requires heme as cofactor.

Its subcellular location is the membrane. The protein is Cytochrome P450 20A1 (CYP20A1) of Homo sapiens (Human).